Consider the following 84-residue polypeptide: Small ribosomal subunit protein uS17 (84 aa).

This sequence belongs to the universal ribosomal protein uS17 family. In terms of assembly, part of the 30S ribosomal subunit.

Functionally, one of the primary rRNA binding proteins, it binds specifically to the 5'-end of 16S ribosomal RNA. This Histophilus somni (strain 129Pt) (Haemophilus somnus) protein is Small ribosomal subunit protein uS17.